The primary structure comprises 183 residues: Large ribosomal subunit protein uL5 (183 aa).

Belongs to the universal ribosomal protein uL5 family. Part of the 50S ribosomal subunit; part of the 5S rRNA/L5/L18/L25 subcomplex. Contacts the 5S rRNA and the P site tRNA. Forms a bridge to the 30S subunit in the 70S ribosome.

Functionally, this is one of the proteins that bind and probably mediate the attachment of the 5S RNA into the large ribosomal subunit, where it forms part of the central protuberance. In the 70S ribosome it contacts protein S13 of the 30S subunit (bridge B1b), connecting the 2 subunits; this bridge is implicated in subunit movement. Contacts the P site tRNA; the 5S rRNA and some of its associated proteins might help stabilize positioning of ribosome-bound tRNAs. In Leptospira biflexa serovar Patoc (strain Patoc 1 / Ames), this protein is Large ribosomal subunit protein uL5.